The chain runs to 381 residues: Peptidoglycan transport system permease protein YejE (381 aa).

5 helical membrane passes run 38-58 (YWSF…EFIA), 183-203 (VLFG…AGAI), 230-250 (ILLI…GIML), 292-312 (LLPN…SGSI), and 347-367 (WLGL…IFVG). An ABC transmembrane type-1 domain is found at 179–371 (FRISVLFGLT…LLIFVGEAVR (193 aa)).

The protein belongs to the binding-protein-dependent transport system permease family. In terms of assembly, the complex is composed of one ATP-binding protein (YejF), two transmembrane proteins (YejB and YejE) and a solute-binding protein (YepA or YejA).

It is found in the cell inner membrane. Its function is as follows. Part of the ABC transporter complex YejBEF-YepA involved in the uptake of muropeptides, the breakdown products of cell wall peptidoglycan. The import of muropeptides into the cell enables peptidoglycan recycling, which is vital for cell wall integrity in this bacterium. Is also probably part of the ABC transporter complex YejABEF, which is likely involved in broad-spectrum peptide import. Responsible for the translocation of the substrate across the membrane. The sequence is that of Peptidoglycan transport system permease protein YejE from Agrobacterium fabrum (strain C58 / ATCC 33970) (Agrobacterium tumefaciens (strain C58)).